The sequence spans 280 residues: Urease accessory protein UreD (280 aa).

It belongs to the UreD family. UreD, UreF and UreG form a complex that acts as a GTP-hydrolysis-dependent molecular chaperone, activating the urease apoprotein by helping to assemble the nickel containing metallocenter of UreC. The UreE protein probably delivers the nickel.

It is found in the cytoplasm. Required for maturation of urease via the functional incorporation of the urease nickel metallocenter. In Pseudomonas aeruginosa (strain UCBPP-PA14), this protein is Urease accessory protein UreD.